The chain runs to 224 residues: Ribonuclease HII (224 aa).

The region spanning 33-224 (FHVAGVDEVG…LKERYRNDVS (192 aa)) is the RNase H type-2 domain. The a divalent metal cation site is built by D39, E40, and D131.

Belongs to the RNase HII family. Requires Mn(2+) as cofactor. The cofactor is Mg(2+).

Its subcellular location is the cytoplasm. The enzyme catalyses Endonucleolytic cleavage to 5'-phosphomonoester.. In terms of biological role, endonuclease that specifically degrades the RNA of RNA-DNA hybrids. This chain is Ribonuclease HII, found in Bartonella tribocorum (strain CIP 105476 / IBS 506).